A 313-amino-acid polypeptide reads, in one-letter code: GTP cyclohydrolase MptA (313 aa).

The protein belongs to the GTP cyclohydrolase IV family. In terms of assembly, homodimer. Fe(2+) is required as a cofactor.

It catalyses the reaction GTP + H2O = 7,8-dihydroneopterin 2',3'-cyclic phosphate + formate + diphosphate + H(+). The protein operates within cofactor biosynthesis; 5,6,7,8-tetrahydromethanopterin biosynthesis. With respect to regulation, inhibited by GTP concentrations greater than 0.3 mM and by 2-amino-5-formylamino-6-ribofuranosylamino-4(3H)-pyrimidinone 5'-phosphate (fapyGMP). Partial inhibition is observed when 2 mM GMP, dGTP, or 7-methyl-GTP was included along with 2 mM GTP. Functionally, converts GTP to 7,8-dihydro-D-neopterin 2',3'-cyclic phosphate, the first intermediate in the biosynthesis of coenzyme methanopterin. It is also able to utilize a variety of GTP analogs as substrates, including GDP, beta,gamma-methylene-GTP and GTP-[gamma-thio]. The polypeptide is GTP cyclohydrolase MptA (mptA) (Methanocaldococcus jannaschii (strain ATCC 43067 / DSM 2661 / JAL-1 / JCM 10045 / NBRC 100440) (Methanococcus jannaschii)).